The primary structure comprises 420 residues: Protein translocase subunit SecF (420 aa).

Transmembrane regions (helical) follow at residues 7–27, 250–270, 276–296, 309–327, 358–378, and 388–408; these read FSLLFLPCAILSVVLIGAGVL, LLVRQALLLVLGALVLIFLYV, WFFALGAIVALVHDACIMVSF, IAAILTIIGYSINDTVVVF, VVTTVTTLLAALMLYVFTEGG, and VGMVSGVYSTIYIAGGCIALI.

Belongs to the SecD/SecF family. SecF subfamily. As to quaternary structure, forms a complex with SecD. Part of the essential Sec protein translocation apparatus which comprises SecA, SecYEG and auxiliary proteins SecDF. Other proteins may also be involved.

The protein localises to the cell inner membrane. In terms of biological role, part of the Sec protein translocase complex. Interacts with the SecYEG preprotein conducting channel. SecDF uses the proton motive force (PMF) to complete protein translocation after the ATP-dependent function of SecA. This Treponema pallidum (strain Nichols) protein is Protein translocase subunit SecF.